Here is a 243-residue protein sequence, read N- to C-terminus: 3-deoxy-manno-octulosonate cytidylyltransferase (243 aa).

This sequence belongs to the KdsB family.

The protein localises to the cytoplasm. It carries out the reaction 3-deoxy-alpha-D-manno-oct-2-ulosonate + CTP = CMP-3-deoxy-beta-D-manno-octulosonate + diphosphate. The protein operates within nucleotide-sugar biosynthesis; CMP-3-deoxy-D-manno-octulosonate biosynthesis; CMP-3-deoxy-D-manno-octulosonate from 3-deoxy-D-manno-octulosonate and CTP: step 1/1. It participates in bacterial outer membrane biogenesis; lipopolysaccharide biosynthesis. Functionally, activates KDO (a required 8-carbon sugar) for incorporation into bacterial lipopolysaccharide in Gram-negative bacteria. The sequence is that of 3-deoxy-manno-octulosonate cytidylyltransferase from Helicobacter acinonychis (strain Sheeba).